The sequence spans 153 residues: Aminoglycoside N(6')-acetyltransferase type 1 (153 aa).

Residues P6–A153 enclose the N-acetyltransferase domain. Positions 27, 70, 83, 119, and 140 each coordinate substrate.

Homodimer.

The catalysed reaction is kanamycin B + acetyl-CoA = N(6')-acetylkanamycin B + CoA + H(+). Catalyzes the transfer of an acetyl group from acetyl-CoA to the 6'-amino group of aminoglycoside molecules conferring resistance to antibiotics containing the purpurosamine ring including amikacin, gentamicin, kanamycin B, tobramycin, netilmicin, and isepamicin. This is Aminoglycoside N(6')-acetyltransferase type 1 from Stenotrophomonas maltophilia (Pseudomonas maltophilia).